A 654-amino-acid polypeptide reads, in one-letter code: DNA ligase (654 aa).

NAD(+) is bound by residues aspartate 37–aspartate 41, serine 86–methionine 87, and glutamate 113. Lysine 115 (N6-AMP-lysine intermediate) is an active-site residue. The NAD(+) site is built by arginine 136, glutamate 170, and lysine 308. Cysteine 402, cysteine 405, cysteine 418, and cysteine 423 together coordinate Zn(2+). The BRCT domain occupies isoleucine 576–isoleucine 654.

It belongs to the NAD-dependent DNA ligase family. LigA subfamily. It depends on Mg(2+) as a cofactor. Requires Mn(2+) as cofactor.

It carries out the reaction NAD(+) + (deoxyribonucleotide)n-3'-hydroxyl + 5'-phospho-(deoxyribonucleotide)m = (deoxyribonucleotide)n+m + AMP + beta-nicotinamide D-nucleotide.. Its function is as follows. DNA ligase that catalyzes the formation of phosphodiester linkages between 5'-phosphoryl and 3'-hydroxyl groups in double-stranded DNA using NAD as a coenzyme and as the energy source for the reaction. It is essential for DNA replication and repair of damaged DNA. The chain is DNA ligase from Campylobacter curvus (strain 525.92).